The chain runs to 433 residues: Arabinooligosaccharide-binding protein (433 aa).

An N-terminal signal peptide occupies residues 1 to 21 (MKKMTVCFLVLMMLLTLVIAG). C22 carries the N-palmitoyl cysteine lipid modification. A lipid anchor (S-diacylglycerol cysteine) is attached at C22.

The protein belongs to the bacterial solute-binding protein 1 family. As to quaternary structure, the complex is composed of two ATP-binding proteins (MsmX), two transmembrane proteins (AraP and AraQ) and a solute-binding protein (AraN).

The protein resides in the cell membrane. Its function is as follows. Part of the ABC transporter complex AraNPQ involved in the uptake of arabinooligosaccharides. Transports alpha-1,5-arabinooligosaccharides, at least up to four L-arabinosyl units. AraN captures the substrate and delivers it to the two transmembrane components. This chain is Arabinooligosaccharide-binding protein, found in Bacillus subtilis (strain 168).